Here is a 352-residue protein sequence, read N- to C-terminus: tRNA N6-adenosine threonylcarbamoyltransferase (352 aa).

Residues His111 and His115 each contribute to the Fe cation site. Substrate contacts are provided by residues 133–137 (LASGG), Asp166, Gly179, and Asn275. Asp300 serves as a coordination point for Fe cation.

The protein belongs to the KAE1 / TsaD family. Fe(2+) serves as cofactor.

The protein localises to the cytoplasm. It carries out the reaction L-threonylcarbamoyladenylate + adenosine(37) in tRNA = N(6)-L-threonylcarbamoyladenosine(37) in tRNA + AMP + H(+). Functionally, required for the formation of a threonylcarbamoyl group on adenosine at position 37 (t(6)A37) in tRNAs that read codons beginning with adenine. Is involved in the transfer of the threonylcarbamoyl moiety of threonylcarbamoyl-AMP (TC-AMP) to the N6 group of A37, together with TsaE and TsaB. TsaD likely plays a direct catalytic role in this reaction. The polypeptide is tRNA N6-adenosine threonylcarbamoyltransferase (Treponema pallidum (strain Nichols)).